Consider the following 372-residue polypeptide: Anhydro-N-acetylmuramic acid kinase (372 aa).

ATP is bound at residue 14–21 (GTSLDGVD).

This sequence belongs to the anhydro-N-acetylmuramic acid kinase family.

The catalysed reaction is 1,6-anhydro-N-acetyl-beta-muramate + ATP + H2O = N-acetyl-D-muramate 6-phosphate + ADP + H(+). Its pathway is amino-sugar metabolism; 1,6-anhydro-N-acetylmuramate degradation. It participates in cell wall biogenesis; peptidoglycan recycling. Catalyzes the specific phosphorylation of 1,6-anhydro-N-acetylmuramic acid (anhMurNAc) with the simultaneous cleavage of the 1,6-anhydro ring, generating MurNAc-6-P. Is required for the utilization of anhMurNAc either imported from the medium or derived from its own cell wall murein, and thus plays a role in cell wall recycling. The chain is Anhydro-N-acetylmuramic acid kinase from Photorhabdus laumondii subsp. laumondii (strain DSM 15139 / CIP 105565 / TT01) (Photorhabdus luminescens subsp. laumondii).